Consider the following 784-residue polypeptide: Ribosome biogenesis protein BOP1 homolog (784 aa).

The segment covering 1–11 (MTKKLALKRKG) has biased composition (basic residues). Residues 1-159 (MTKKLALKRK…DSDTSDEEDI (159 aa)) are disordered. Acidic residues-rich tracts occupy residues 27–36 (SENEEEEEDL), 45–54 (EDSTDDEGID), 62–73 (SEELQFESDEEG), and 84–111 (AEED…EDEE). The segment covering 112-123 (KDSKLKQSDDKP) has biased composition (basic and acidic residues). A compositionally biased stretch (low complexity) spans 124 to 133 (SSSGAASKKA). The span at 138 to 148 (LSKRDTSKPEY) shows a compositional bias: basic and acidic residues. Residues 149 to 158 (QDSDTSDEED) show a composition bias toward acidic residues. WD repeat units follow at residues 445 to 486 (GHTD…RTIE), 488 to 526 (DEVV…KVLV), 570 to 612 (THFK…SQIP), 615 to 653 (KSKG…LVKK), 656 to 695 (TNSK…KPYQ), 699 to 738 (LHRN…DLLQ), and 754 to 784 (RDEF…RLYT).

It belongs to the WD repeat BOP1/ERB1 family.

Its subcellular location is the nucleus. It localises to the nucleolus. The protein localises to the nucleoplasm. In terms of biological role, required for maturation of ribosomal RNAs and formation of the large ribosomal subunit. The chain is Ribosome biogenesis protein BOP1 homolog from Drosophila erecta (Fruit fly).